The sequence spans 511 residues: MDINPSEVTKILKEQIKKFGDKAEVTEVGQVLSVGDGIARVYGLDNVQAGEMVEFSDGSKGMALNLESENVGVVIFGDDRKIKEGDVVKRTGSIVDTPVGKELLGRVVDGLGNPIDGKGALDKATKRSRVEVKAPGIIPRQSVSEPMQTGLKSIDSLVPVGRGQRELIIGDRQTGKTAVAIDAIINQKKINESGDEKQKLYCIYVAIGQKRSTVRQIQKTLEEAGAMEYTTIVAATASDAAPLQFLAPYTGCTMGEYYRDNGMHALIIYDDLSKQAVAYRQMSLLLRRPPGREAYPGDVFYLHSRLLERAAKLSDEHGGGSLTALPIIETQGGDVSAFIPTNVISITDGQIFLETELFNQGIRPAINVGLSVSRVGSAAQTKAMKKVSGSMKLELAQYREMAAFAQFGSDLDASTQKLLNRGSKLTELLKQKQYSPMTVAEQVISVFCGVKGYLDDVELKDIAEFESKIIEKCKSEKPEILESVLSSGKLEEDTEKSLVDTIMELKKNFNS.

170-177 (GDRQTGKT) contributes to the ATP binding site.

This sequence belongs to the ATPase alpha/beta chains family. In terms of assembly, F-type ATPases have 2 components, CF(1) - the catalytic core - and CF(0) - the membrane proton channel. CF(1) has five subunits: alpha(3), beta(3), gamma(1), delta(1), epsilon(1). CF(0) has three main subunits: a(1), b(2) and c(9-12). The alpha and beta chains form an alternating ring which encloses part of the gamma chain. CF(1) is attached to CF(0) by a central stalk formed by the gamma and epsilon chains, while a peripheral stalk is formed by the delta and b chains.

The protein localises to the cell inner membrane. The enzyme catalyses ATP + H2O + 4 H(+)(in) = ADP + phosphate + 5 H(+)(out). Its function is as follows. Produces ATP from ADP in the presence of a proton gradient across the membrane. The alpha chain is a regulatory subunit. The sequence is that of ATP synthase subunit alpha from Pelagibacter ubique (strain HTCC1062).